The sequence spans 1347 residues: Neurofascin (1347 aa).

Residues 1 to 24 (MARQPPPPWVHAAFLLCLLSLGGA) form the signal peptide. At 25-1217 (IEIPMDPSIQ…NQADIATQGW (1193 aa)) the chain is on the extracellular side. 6 Ig-like C2-type domains span residues 41–137 (PTIT…LQVS), 143–230 (PKEN…NPFT), 244–332 (PSFM…ISVR), 337–424 (PYWL…AFVS), 429–517 (PPRM…VRLE), and 521–603 (PTRI…QDLA). Cystine bridges form between C63–C118, C162–C213, C268–C316, and C358–C408. N-linked (GlcNAc...) asparagine glycosylation is present at N305. 2 N-linked (GlcNAc...) asparagine glycosylation sites follow: N409 and N446. Cystine bridges form between C452/C501 and C543/C592. A Phosphotyrosine modification is found at Y481. An N-linked (GlcNAc...) asparagine glycan is attached at N483. The residue at position 485 (S485) is a Phosphoserine. Fibronectin type-III domains follow at residues 630–725 (RPRD…TSGA), 730–823 (NPGD…SGED), 828–930 (APTE…TPEG), and 934–1030 (APRR…PNEA). The segment at 713–740 (PSLPSERYRTSGAPPESNPGDVKGEGTR) is disordered. N752 and N778 each carry an N-linked (GlcNAc...) asparagine glycan. Residues 915-934 (GDGPRSETKEFTTPEGVPSA) form a disordered region. Residues 916–926 (DGPRSETKEFT) are compositionally biased toward basic and acidic residues. 2 N-linked (GlcNAc...) asparagine glycosylation sites follow: N973 and N988. Disordered regions lie at residues 1011–1040 (TQVG…PTLP) and 1090–1111 (TTAA…TKIH). Over residues 1024 to 1040 (PAPPNEATPTAAPPTLP) the composition is skewed to pro residues. Residues 1090 to 1105 (TTAAATTTTESPPTTT) are compositionally biased toward low complexity. The 93-residue stretch at 1114 to 1206 (APDEQSIWNV…ITFMTSTAYT (93 aa)) folds into the Fibronectin type-III 5 domain. Residues 1218 to 1238 (FIGLMCAIALLVLILLIVCFI) form a helical membrane-spanning segment. Residues 1239 to 1347 (KRSRGGKYPV…SPVNAIYSLA (109 aa)) lie on the Cytoplasmic side of the membrane. The tract at residues 1248-1347 (VREKKDVPLG…SPVNAIYSLA (100 aa)) is disordered. Residues 1261 to 1272 (PKEEDGSFDYSD) are compositionally biased toward acidic residues. A phosphoserine mark is found at S1267, S1281, S1294, S1297, S1333, S1334, and S1338. Over residues 1278–1291 (LQGSQTSLDGTIKQ) the composition is skewed to polar residues.

Belongs to the immunoglobulin superfamily. L1/neurofascin/NgCAM family. As to quaternary structure, horseshoe-shaped homodimer. Probable constituent of a NFASC/NRCAM/ankyrin-G complex. Associates with the sodium channel beta-1 (SCN1B) and beta-3 (SCN3B) subunits. Interacts with GLDN/gliomedin. Interacts with MYOC.

The protein localises to the cell membrane. Its subcellular location is the cell junction. The protein resides in the paranodal septate junction. Cell adhesion, ankyrin-binding protein which may be involved in neurite extension, axonal guidance, synaptogenesis, myelination and neuron-glial cell interactions. The protein is Neurofascin (NFASC) of Homo sapiens (Human).